Consider the following 163-residue polypeptide: Cyanate hydratase (163 aa).

Residues Arg-103, Glu-106, and Ser-129 contribute to the active site.

The protein belongs to the cyanase family.

The enzyme catalyses cyanate + hydrogencarbonate + 3 H(+) = NH4(+) + 2 CO2. Its function is as follows. Catalyzes the reaction of cyanate with bicarbonate to produce ammonia and carbon dioxide. In Talaromyces stipitatus (strain ATCC 10500 / CBS 375.48 / QM 6759 / NRRL 1006) (Penicillium stipitatum), this protein is Cyanate hydratase.